A 483-amino-acid polypeptide reads, in one-letter code: Glycogen synthase (483 aa).

Residue Lys15 coordinates ADP-alpha-D-glucose.

The protein belongs to the glycosyltransferase 1 family. Bacterial/plant glycogen synthase subfamily.

The catalysed reaction is [(1-&gt;4)-alpha-D-glucosyl](n) + ADP-alpha-D-glucose = [(1-&gt;4)-alpha-D-glucosyl](n+1) + ADP + H(+). It functions in the pathway glycan biosynthesis; glycogen biosynthesis. Synthesizes alpha-1,4-glucan chains using ADP-glucose. This Desulfatibacillum aliphaticivorans protein is Glycogen synthase.